The sequence spans 242 residues: 4-hydroxy-tetrahydrodipicolinate reductase (242 aa).

NAD(+) is bound by residues 8-13, 75-77, and 99-102; these read GAKGRM, GTT, and ATNM. The Proton donor/acceptor role is filled by His131. His132 contacts (S)-2,3,4,5-tetrahydrodipicolinate. The active-site Proton donor is the Lys135. 141–142 is a binding site for (S)-2,3,4,5-tetrahydrodipicolinate; the sequence is GT.

This sequence belongs to the DapB family.

The protein localises to the cytoplasm. It carries out the reaction (S)-2,3,4,5-tetrahydrodipicolinate + NAD(+) + H2O = (2S,4S)-4-hydroxy-2,3,4,5-tetrahydrodipicolinate + NADH + H(+). It catalyses the reaction (S)-2,3,4,5-tetrahydrodipicolinate + NADP(+) + H2O = (2S,4S)-4-hydroxy-2,3,4,5-tetrahydrodipicolinate + NADPH + H(+). The protein operates within amino-acid biosynthesis; L-lysine biosynthesis via DAP pathway; (S)-tetrahydrodipicolinate from L-aspartate: step 4/4. In terms of biological role, catalyzes the conversion of 4-hydroxy-tetrahydrodipicolinate (HTPA) to tetrahydrodipicolinate. This chain is 4-hydroxy-tetrahydrodipicolinate reductase, found in Campylobacter jejuni subsp. jejuni serotype O:6 (strain 81116 / NCTC 11828).